The chain runs to 25 residues: Mu-conotoxin CnIIIB (25 aa).

Residue glutamine 1 is modified to Pyrrolidone carboxylic acid; partial. Disulfide bonds link cysteine 3-cysteine 15, cysteine 4-cysteine 21, and cysteine 10-cysteine 22.

Belongs to the conotoxin M superfamily. As to expression, expressed by the venom duct.

The protein resides in the secreted. Its function is as follows. Mu-conotoxins block voltage-gated sodium channels (Nav). This synthetic toxin blocks slightly but irreversibly tetrodotoxin-resistant VGSCs. The polypeptide is Mu-conotoxin CnIIIB (Conus consors (Singed cone)).